Consider the following 107-residue polypeptide: Probable 4-amino-4-deoxy-L-arabinose-phosphoundecaprenol flippase subunit ArnE (107 aa).

The EamA domain occupies 31 to 105 (RVWGWLALSL…IIVGIILLGG (75 aa)). Transmembrane regions (helical) follow at residues 34–54 (GWLA…LFVL), 57–77 (VPVS…TLAA), and 85–105 (IALR…LLGG).

It belongs to the ArnE family. In terms of assembly, heterodimer of ArnE and ArnF.

The protein localises to the cell inner membrane. It participates in bacterial outer membrane biogenesis; lipopolysaccharide biosynthesis. Translocates 4-amino-4-deoxy-L-arabinose-phosphoundecaprenol (alpha-L-Ara4N-phosphoundecaprenol) from the cytoplasmic to the periplasmic side of the inner membrane. The protein is Probable 4-amino-4-deoxy-L-arabinose-phosphoundecaprenol flippase subunit ArnE of Enterobacter sp. (strain 638).